The primary structure comprises 264 residues: 5'-nucleotidase SurE (264 aa).

Residues aspartate 10, aspartate 11, serine 43, and asparagine 99 each coordinate a divalent metal cation.

It belongs to the SurE nucleotidase family. Requires a divalent metal cation as cofactor.

The protein localises to the cytoplasm. The enzyme catalyses a ribonucleoside 5'-phosphate + H2O = a ribonucleoside + phosphate. Functionally, nucleotidase that shows phosphatase activity on nucleoside 5'-monophosphates. The polypeptide is 5'-nucleotidase SurE (Methanococcus maripaludis (strain C7 / ATCC BAA-1331)).